Reading from the N-terminus, the 420-residue chain is MEIISQYGSWLVWITAVFGFFMAFGIGANDVSNSMGTSVGSGTITAKQAIIIALIFESAGAYLAGGEVTQTIKSGVIEPIQFVDTPDILALGMLSTLFASGAWLFIATKMGWPVSGTHTIIGAIIGFACITIGPSSVDWSKIGSIVGSWFVTPVIAGILAYAIFASTQKLIFDTEQPLKNAQKYGPYYMGITVFVLCIVTMKKGLKHVGLNLSNSETLIISLAISLIGMFFFHFYFKSKIFTQSANKGTFGAVEKVFSILMLLTACAMAFAHGSNDVANAIGPLSAVVSIVNEGGKIVSGGALTWWILPLGALGIAVGLITMGQKVMATVGSGITDLTPSRGFAAQFATAMTVVVASGTGLPISTTQTLVGAILGIGFARGIAALNLTVIRNIISSWIVTLPAGAFFAIIIFYVLRTIFN.

A run of 12 helical transmembrane segments spans residues 8–28 (GSWLVWITAVFGFFMAFGIGA), 49–69 (AIIIALIFESAGAYLAGGEVT), 88–108 (ILALGMLSTLFASGAWLFIAT), 112–132 (WPVSGTHTIIGAIIGFACITI), 145–165 (IVGSWFVTPVIAGILAYAIFA), 185–205 (GPYYMGITVFVLCIVTMKKGL), 216–236 (ETLIISLAISLIGMFFFHFYF), 250–270 (FGAVEKVFSILMLLTACAMAF), 300–320 (GGALTWWILPLGALGIAVGLI), 343–363 (FAAQFATAMTVVVASGTGLPI), 370–390 (VGAILGIGFARGIAALNLTVI), and 393–413 (IISSWIVTLPAGAFFAIIIFY).

It belongs to the inorganic phosphate transporter (PiT) (TC 2.A.20) family.

The protein resides in the cell inner membrane. In terms of biological role, potential transporter for phosphate. This Haemophilus influenzae (strain ATCC 51907 / DSM 11121 / KW20 / Rd) protein is Putative phosphate permease HI_1604.